Here is a 943-residue protein sequence, read N- to C-terminus: MTQDYKATLHLPATEFPMRGDLPKREPAMLERWEREGFYAQLRANAAGRPLFVLHDGPPYANGQIHLGHAVNKILKDIIVKSKCLAGFDAPYIPGWDCHGLPIEIAIEKKYGKVGVKLDAAEFRQKCREYATEQIDLQRRDFKRLGVIGDWDNPYKTLDFRFEANEIRALAKVVDNGHLTRGVKPVHWCFDCGSALAEAEIEYADKVSPTVDIAYPARDPGAVAAAFGATLPGGVGVAVPIWTTTPWTLPASLAVSLGAELDYVLVEGPADRGQPRWLVIAEALAAKALARYGVDEVVVHGHAKGTALEQMLLNHPFYAEREIPLLLGDHVSAEDGTGAVHTAPGHGQEDYQVSKQYGLLERYGAAQINPVDGRGVYLPSTPPLGDTVLAGLHIWKANDVIIEALHGTGVLLAASKMEHSYPHCWRHKTPIAFRATPQWFISMEQANLRADALKAIESVHWYPSWGQARIAGMVDGRPDWTISRQRTWGVPIALFVHRETGEPHPRSTELLRQVADRVELGGVDVWYTLDAAELLGDEAADYDKITDILDVWFDSGVTHEAVLVDRGLPKPADLYLEGSDQHRGWFQSSLLSGVAMDKAAPYKQCLTHGFTVDEHGRKMSKSLGNGIEPQDIMKTLGADILRLWIASADYSNEMSLSQEILKRNADAYRRLRNTARFLLGNLHGFDPLQHLVALEDMVLLDRWIVHRAHELQEKIVAAYARYDFAEIVQALLNFCSVDLGSLYLDVTKDRLYTMAEDARGRRSAQSAMYHVAEAFVRWIAPVMSFTADELWGYLPGKHVGNVLFATWYGGLAPLPADAALTSADFDKLLALREQVSKVLEPMRANGAIGAALEAEITVAADVQTAARWQPLAEELRFLFISGDVTVTAASTDDIFVSAQPTTKAKCVRCWHHQSSVGSDPRHPELCSRCVSNIEGPGEERRWF.

A 'HIGH' region motif is present at residues 59-69 (PYANGQIHLGH). E577 contacts L-isoleucyl-5'-AMP. The 'KMSKS' region signature appears at 618–622 (KMSKS). An ATP-binding site is contributed by K621. Zn(2+)-binding residues include C906, C909, C926, and C929.

The protein belongs to the class-I aminoacyl-tRNA synthetase family. IleS type 1 subfamily. Monomer. The cofactor is Zn(2+).

Its subcellular location is the cytoplasm. It carries out the reaction tRNA(Ile) + L-isoleucine + ATP = L-isoleucyl-tRNA(Ile) + AMP + diphosphate. Catalyzes the attachment of isoleucine to tRNA(Ile). As IleRS can inadvertently accommodate and process structurally similar amino acids such as valine, to avoid such errors it has two additional distinct tRNA(Ile)-dependent editing activities. One activity is designated as 'pretransfer' editing and involves the hydrolysis of activated Val-AMP. The other activity is designated 'posttransfer' editing and involves deacylation of mischarged Val-tRNA(Ile). This Xanthomonas oryzae pv. oryzae (strain MAFF 311018) protein is Isoleucine--tRNA ligase.